A 44-amino-acid chain; its full sequence is MQHANCNREIKIYEGAKHHLHKETDEVKKSVMKEIETWIFNRVK.

This is an uncharacterized protein from Vaccinia virus (strain Western Reserve) (VACV).